The sequence spans 360 residues: Protein phosphatase methylesterase 1 (360 aa).

Residues 26–50 (DEDDIPEPAVMPPTGNSSSTANTED) are disordered. Residues Ser-167, Asp-192, and His-316 contribute to the active site.

The protein belongs to the AB hydrolase superfamily.

It carries out the reaction [phosphatase 2A protein]-C-terminal L-leucine methyl ester + H2O = [phosphatase 2A protein]-C-terminal L-leucine + methanol + H(+). Demethylates proteins that have been reversibly carboxymethylated. Demethylates the phosphatase PP2A catalytic subunit. Involved in the regulation of filamentous growth. The polypeptide is Protein phosphatase methylesterase 1 (PPE1) (Candida albicans (strain SC5314 / ATCC MYA-2876) (Yeast)).